The primary structure comprises 237 residues: Probable transcriptional regulatory protein Bpro_2928 (237 aa).

It belongs to the TACO1 family.

Its subcellular location is the cytoplasm. In Polaromonas sp. (strain JS666 / ATCC BAA-500), this protein is Probable transcriptional regulatory protein Bpro_2928.